Here is a 94-residue protein sequence, read N- to C-terminus: uncharacterized protein (94 aa).

This is an uncharacterized protein from Bacillus subtilis (strain 168).